Reading from the N-terminus, the 178-residue chain is Protein RICE FLOWERING LOCUS T 1 (178 aa).

Belongs to the phosphatidylethanolamine-binding protein family. In terms of assembly, interacts with FTIP1. In terms of tissue distribution, expressed in leaf vascular tissues. Specifically expressed in the phloem including companion cells.

Its subcellular location is the cytoplasm. The protein localises to the nucleus. It localises to the endoplasmic reticulum. Probable mobile flower-promoting signal (florigen) that moves from the leaf to the shoot apical meristem (SAM) and induces flowering. Promotes the transition from vegetative growth to flowering under long day (LD) conditions. Acts upstream of MADS14 and MADS15. May also participate in the promotion of flowering under short day (SD) conditions. The sequence is that of Protein RICE FLOWERING LOCUS T 1 from Oryza sativa subsp. japonica (Rice).